Here is a 227-residue protein sequence, read N- to C-terminus: UPF0173 metal-dependent hydrolase BCAH187_A4741 (227 aa).

It belongs to the UPF0173 family.

This Bacillus cereus (strain AH187) protein is UPF0173 metal-dependent hydrolase BCAH187_A4741.